The sequence spans 780 residues: Aconitate hydratase, mitochondrial (780 aa).

Residues 1–27 (MAPYSLLVTRLQKALGVRQYHVASVLC) constitute a mitochondrion transit peptide. K31 carries the N6-succinyllysine modification. An N6-acetyllysine; alternate modification is found at K50. An N6-succinyllysine; alternate modification is found at K50. Q99 provides a ligand contact to substrate. Residues K138 and K144 each carry the N6-acetyllysine; alternate modification. 2 positions are modified to N6-succinyllysine; alternate: K138 and K144. 192 to 194 (DSH) serves as a coordination point for substrate. K233 is modified (N6-acetyllysine; alternate). K233 carries the post-translational modification N6-succinyllysine; alternate. Position 385 (C385) interacts with [4Fe-4S] cluster. Position 411 is an N6-succinyllysine (K411). [4Fe-4S] cluster is bound by residues C448 and C451. Positions 474 and 479 each coordinate substrate. A compositionally biased stretch (basic and acidic residues) spans 528–537 (DADELPKGEF). The disordered stretch occupies residues 528 to 560 (DADELPKGEFDPGQDTYQHPPKDSSGQHVDVSP). At K549 the chain carries N6-succinyllysine. Positions 551 to 560 (SSGQHVDVSP) are enriched in polar residues. A Phosphoserine modification is found at S559. Position 573 is an N6-acetyllysine; alternate (K573). N6-succinyllysine; alternate is present on K573. N6-succinyllysine is present on residues K577 and K591. K605 bears the N6-acetyllysine; alternate mark. N6-succinyllysine; alternate is present on K605. A substrate-binding site is contributed by R607. N6-succinyllysine is present on K628. A Phosphoserine modification is found at S670. 670–671 (SR) lines the substrate pocket. Residue K689 is modified to N6-succinyllysine. N6-acetyllysine; alternate is present on residues K723 and K730. N6-succinyllysine; alternate occurs at positions 723 and 730. N6-acetyllysine is present on residues K736, K739, and K743.

The protein belongs to the aconitase/IPM isomerase family. Monomer. It depends on [4Fe-4S] cluster as a cofactor. Post-translationally, forms covalent cross-links mediated by transglutaminase TGM2, between a glutamine and the epsilon-amino group of a lysine residue, forming homopolymers and heteropolymers.

It is found in the mitochondrion. The enzyme catalyses citrate = D-threo-isocitrate. It participates in carbohydrate metabolism; tricarboxylic acid cycle; isocitrate from oxaloacetate: step 2/2. Catalyzes the isomerization of citrate to isocitrate via cis-aconitate. This Homo sapiens (Human) protein is Aconitate hydratase, mitochondrial (ACO2).